A 335-amino-acid polypeptide reads, in one-letter code: F420-dependent glucose-6-phosphate dehydrogenase 1 (335 aa).

Coenzyme F420-(gamma-Glu)n is bound at residue D38. The active-site Proton donor is the H39. Coenzyme F420-(gamma-Glu)n contacts are provided by residues T75 and 106 to 107 (TG). Residue E108 is the Proton acceptor of the active site. Residues N111, 176-177 (GG), and 179-180 (VV) contribute to the coenzyme F420-(gamma-Glu)n site. Substrate is bound by residues T194, K197, K258, and R282.

This sequence belongs to the F420-dependent glucose-6-phosphate dehydrogenase family. Homodimer.

The enzyme catalyses oxidized coenzyme F420-(gamma-L-Glu)(n) + D-glucose 6-phosphate + H(+) = 6-phospho-D-glucono-1,5-lactone + reduced coenzyme F420-(gamma-L-Glu)(n). Functionally, catalyzes the coenzyme F420-dependent oxidation of glucose 6-phosphate (G6P) to 6-phosphogluconolactone. The protein is F420-dependent glucose-6-phosphate dehydrogenase 1 of Rhodococcus jostii (strain RHA1).